A 723-amino-acid polypeptide reads, in one-letter code: LIM domain-binding protein 3 (723 aa).

The region spanning Met-1–Lys-84 is the PDZ domain. 3 positions are modified to phosphoserine: Ser-44, Ser-98, and Asp-112. 2 disordered regions span residues Ile-89–Glu-134 and Ser-164–Asn-193. Residue Thr-119 is modified to Phosphothreonine. A phosphoserine mark is found at Ser-121 and Ser-123. A Phosphoserine modification is found at Ser-214. Arg-216 carries the omega-N-methylarginine modification. A phosphoserine mark is found at Ser-220, Ser-251, and Asp-288. Disordered regions lie at residues Gly-280–Thr-423 and Ser-436–Thr-525. The residue at position 291 (Ala-291) is an Omega-N-methylarginine. A compositionally biased stretch (low complexity) spans Ala-309 to Ala-376. The residue at position 327 (Ile-327) is a Phosphoserine. Ser-330 carries the post-translational modification Omega-N-methylarginine. The segment covering Ser-436–Thr-466 has biased composition (pro residues). Over residues Asp-490 to Thr-509 the composition is skewed to polar residues. An omega-N-methylarginine mark is found at Arg-512 and Arg-529. LIM zinc-binding domains lie at Pro-545–Ala-603, Pro-604–Thr-663, and Lys-664–Val-723.

Interacts via its LIM domains with various PKC isoforms. Interacts via its PDZ domain with the ACTN2 C-terminal region. Interacts with MYOZ1, MYOZ2 and MYOZ3. In terms of tissue distribution, expressed primarily in adult heart and skeletal muscle, and detected at lower levels in lung. Isoforms are expressed in a tissue-specific manner. Isoform 1, isoform 3 and isoform 5 are expressed in heart, whereas isoform 2, isoform 4 and isoform 6 are expressed in skeletal muscle.

It localises to the cytoplasm. The protein resides in the perinuclear region. It is found in the cell projection. Its subcellular location is the pseudopodium. The protein localises to the cytoskeleton. It localises to the myofibril. The protein resides in the sarcomere. It is found in the z line. In terms of biological role, may function as an adapter in striated muscle to couple protein kinase C-mediated signaling via its LIM domains to the cytoskeleton. This Mus musculus (Mouse) protein is LIM domain-binding protein 3.